The following is a 329-amino-acid chain: Calponin-3 (329 aa).

Lys23 carries the post-translational modification N6-acetyllysine. The Calponin-homology (CH) domain occupies 26–130; the sequence is HQAEEDLRNW…TLVALAGLAK (105 aa). At Lys158 the chain carries N6-methyllysine. 3 Calponin-like repeats span residues 164–189, 204–229, and 243–268; these read IGLQMGTNKCASQAGMTAYGTRRHLY, ISLQMGTNKGASQAGMLAPGTRRDIY, and ISLQMGTNKVASQKGMSVYGLGRQVY. Residues 280–329 are disordered; sequence VIHNGSQGTGTNGSEISDSDYQAEYPDEYHGEYQDDYPRDYQYGDQGIDY. Positions 306-318 are enriched in basic and acidic residues; that stretch reads DEYHGEYQDDYPR.

This sequence belongs to the calponin family.

Its function is as follows. Thin filament-associated protein that is implicated in the regulation and modulation of smooth muscle contraction. It is capable of binding to actin, calmodulin and tropomyosin. The interaction of calponin with actin inhibits the actomyosin Mg-ATPase activity. The chain is Calponin-3 (CNN3) from Bos taurus (Bovine).